We begin with the raw amino-acid sequence, 508 residues long: Lysine--tRNA ligase (508 aa).

Mg(2+)-binding residues include E418 and E425.

Belongs to the class-II aminoacyl-tRNA synthetase family. As to quaternary structure, homodimer. Mg(2+) serves as cofactor.

The protein localises to the cytoplasm. The enzyme catalyses tRNA(Lys) + L-lysine + ATP = L-lysyl-tRNA(Lys) + AMP + diphosphate. This is Lysine--tRNA ligase from Burkholderia mallei (strain NCTC 10247).